A 415-amino-acid polypeptide reads, in one-letter code: Casein kinase I isoform delta (415 aa).

The Protein kinase domain occupies 9–277; the sequence is YRLGRKIGSG…YLRQLFRNLF (269 aa). Residues 15-23 and Lys38 contribute to the ATP site; that span reads IGSGSFGDI. The active-site Proton acceptor is Asp128. Residues 278-364 form a centrosomal localization signal (CLS) region; it reads HRQGFSYDYV…TSPRPVSGME (87 aa). Over residues 301-315 the composition is skewed to basic and acidic residues; that stretch reads ADDAERERRDREERL. The segment at 301-415 is disordered; that stretch reads ADDAERERRD…SSGLQSVVHR (115 aa). The autoinhibitory stretch occupies residues 317–342; that stretch reads HSRNPATRGLPSTASGRLRGTQEVAP. Phosphoserine occurs at positions 328 and 331. The segment covering 347–358 has biased composition (polar residues); the sequence is TPTSHTANTSPR. Phosphoserine is present on Ser370. The residue at position 375 (Arg375) is an Omega-N-methylarginine. Polar residues predominate over residues 380 to 400; sequence NVSSSDLTGRQDTSRMSTSQI. 6 positions are modified to phosphoserine: Ser382, Ser383, Ser384, Pro401, Ser407, and Ser411.

This sequence belongs to the protein kinase superfamily. CK1 Ser/Thr protein kinase family. Casein kinase I subfamily. As to quaternary structure, monomer. Component of the circadian core oscillator, which includes the CRY proteins, CLOCK, or NPAS2, BMAL1 or BMAL2, CSNK1D and/or CSNK1E, TIMELESS and the PER proteins. Interacts directly with PER1 and PER2 which may lead to their degradation. Interacts with MAP1A. Interacts with MAPT/TAU, DBNDD2, AIB1/NCOA3 and ESR1. Interacts with AKAP9/AKAP450; this interaction promotes centrosomal subcellular location. Binds to tubulins in mitotic cells upon DNA damage. Interacts with GJA1. Interacts with SNAPIN. Interacts with DNMT1. Interacts with DDX3X; this interaction enhances CSNK1D kinase activity in vitro, but it is unclear whether this interaction is physiologically relevant. Interacts with FAM83A, FAM83B, FAM83E and FAM83H (via DUF1669). Post-translationally, autophosphorylated on serine and threonine residues; this autophosphorylation represses activity. Reactivated by phosphatase-mediated dephosphorylation. May be dephosphorylated by PP1. In terms of tissue distribution, expressed ubiquitously. However, kinase activity is not uniform, with highest kinase activity in splenocytes.

The protein resides in the cytoplasm. It localises to the nucleus. It is found in the cytoskeleton. The protein localises to the microtubule organizing center. Its subcellular location is the centrosome. The protein resides in the perinuclear region. It localises to the cell membrane. It is found in the spindle. The protein localises to the golgi apparatus. It catalyses the reaction L-seryl-[protein] + ATP = O-phospho-L-seryl-[protein] + ADP + H(+). The catalysed reaction is L-threonyl-[protein] + ATP = O-phospho-L-threonyl-[protein] + ADP + H(+). The enzyme catalyses L-seryl-[tau protein] + ATP = O-phospho-L-seryl-[tau protein] + ADP + H(+). It carries out the reaction L-threonyl-[tau protein] + ATP = O-phospho-L-threonyl-[tau protein] + ADP + H(+). Exhibits substrate-dependent heparin activation. Drug-mediated inhibition leads to a delay of the oscillations with the magnitude of this effect dependent upon the timing of drug administration. Inhibited by phosphorylation. Functionally, essential serine/threonine-protein kinase that regulates diverse cellular growth and survival processes including Wnt signaling, DNA repair and circadian rhythms. It can phosphorylate a large number of proteins. Casein kinases are operationally defined by their preferential utilization of acidic proteins such as caseins as substrates. Phosphorylates connexin-43/GJA1, MAP1A, SNAPIN, MAPT/TAU, TOP2A, DCK, HIF1A, EIF6, p53/TP53, DVL2, DVL3, ESR1, AIB1/NCOA3, DNMT1, PKD2, YAP1, PER1 and PER2. Central component of the circadian clock. In balance with PP1, determines the circadian period length through the regulation of the speed and rhythmicity of PER1 and PER2 phosphorylation. Controls PER1 and PER2 nuclear transport and degradation. YAP1 phosphorylation promotes its SCF(beta-TRCP) E3 ubiquitin ligase-mediated ubiquitination and subsequent degradation. DNMT1 phosphorylation reduces its DNA-binding activity. Phosphorylation of ESR1 and AIB1/NCOA3 stimulates their activity and coactivation. Phosphorylation of DVL2 and DVL3 regulates WNT3A signaling pathway that controls neurite outgrowth. Phosphorylates NEDD9/HEF1. EIF6 phosphorylation promotes its nuclear export. Triggers down-regulation of dopamine receptors in the forebrain. Activates DCK in vitro by phosphorylation. TOP2A phosphorylation favors DNA cleavable complex formation. May regulate the formation of the mitotic spindle apparatus in extravillous trophoblast. Modulates connexin-43/GJA1 gap junction assembly by phosphorylation. Probably involved in lymphocyte physiology. Regulates fast synaptic transmission mediated by glutamate. This is Casein kinase I isoform delta (Csnk1d) from Mus musculus (Mouse).